Here is a 504-residue protein sequence, read N- to C-terminus: Glycerol kinase (504 aa).

Thr-16 lines the ADP pocket. ATP-binding residues include Thr-16 and Thr-17. Thr-16 serves as a coordination point for sn-glycerol 3-phosphate. Arg-20 is a binding site for ADP. Sn-glycerol 3-phosphate is bound by residues Arg-86, Glu-87, Tyr-138, and Asp-247. Glycerol-binding residues include Arg-86, Glu-87, Tyr-138, Asp-247, and Gln-248. 2 residues coordinate ADP: Thr-269 and Gly-316. Residues Thr-269, Gly-316, Gln-320, and Gly-417 each coordinate ATP. Positions 417 and 421 each coordinate ADP.

This sequence belongs to the FGGY kinase family.

It catalyses the reaction glycerol + ATP = sn-glycerol 3-phosphate + ADP + H(+). Its pathway is polyol metabolism; glycerol degradation via glycerol kinase pathway; sn-glycerol 3-phosphate from glycerol: step 1/1. Inhibited by fructose 1,6-bisphosphate (FBP). Key enzyme in the regulation of glycerol uptake and metabolism. Catalyzes the phosphorylation of glycerol to yield sn-glycerol 3-phosphate. This Trichodesmium erythraeum (strain IMS101) protein is Glycerol kinase.